The chain runs to 22 residues: MLHHMTSRANLLLLRRGGSQRS.

Residues 1–22 (MLHHMTSRANLLLLRRGGSQRS) form a disordered region. Positions 11-22 (LLLLRRGGSQRS) are enriched in low complexity.

Involved in control of the biosynthesis of leucine. The chain is leu leader peptide (leuL) from Corynebacterium glutamicum (strain ATCC 13032 / DSM 20300 / JCM 1318 / BCRC 11384 / CCUG 27702 / LMG 3730 / NBRC 12168 / NCIMB 10025 / NRRL B-2784 / 534).